A 123-amino-acid polypeptide reads, in one-letter code: Large ribosomal subunit protein uL24 (123 aa).

A disordered region spans residues 100-123 (RRPDGSTYKAERSVRISRKTGKEI).

Belongs to the universal ribosomal protein uL24 family. As to quaternary structure, part of the 50S ribosomal subunit.

Functionally, one of two assembly initiator proteins, it binds directly to the 5'-end of the 23S rRNA, where it nucleates assembly of the 50S subunit. One of the proteins that surrounds the polypeptide exit tunnel on the outside of the subunit. The sequence is that of Large ribosomal subunit protein uL24 from Nocardioides sp. (strain ATCC BAA-499 / JS614).